The sequence spans 376 residues: Alpha-ketoglutarate-dependent dioxygenase esdpJ (376 aa).

The Fe cation site is built by His-145 and Asp-147. Position 202 (Thr-202) interacts with 2-oxoglutarate. The interval Tyr-234–Leu-260 is disordered. A compositionally biased stretch (basic and acidic residues) spans Gln-239 to Pro-249. His-335 contacts Fe cation. 2-oxoglutarate-binding residues include Arg-347 and Arg-351. A disordered region spans residues Gly-354–Asn-376. The span at Pro-363 to Asn-376 shows a compositional bias: basic and acidic residues.

The protein belongs to the TfdA dioxygenase family. The cofactor is Fe(2+).

In terms of biological role, alpha-ketoglutarate-dependent dioxygenas; part of the cluster that mediates the biosynthesis of shearones, diterpenoid pyrones (DPs) which are structurally diverse meroterpenoids consisting of a diterpene linked by a pyrone, and which may exhibit a range of bioactivities. The alpha-ketoglutarate-dependent dioxygenase esdpJ seems not to be involved in this pathway. The molecular scaffold is commonly biosynthesized by a series of enzymes including the non-reducing polyketide synthase (NR-PKS) esdpA that generates an alpha-pyrone; the prenyltransferase esdpC that attaches a geranylgeranyl pyrophosphate (GGPP) produced by the GGPP synthase (GGPPS) esdpD onto the pyrone unit; the FAD-dependent monooxygenase esdpE that converts an olefin on the diterpene unit into an epoxide; and the terpene cyclase esdpB that catalyzes the cyclization reactions to give the molecular backbone shearone A. In the modification steps, esdpF oxidizes the hydroxy group to a ketone at C-3 and esdpG then attaches hydroxy groups at both C-11 and C-12. After that, esdpI hydroxylates at C-20 and esdpH hydroxylates at C-6'. The ether bridge is generated by nucleophilic attack of the hydroxy group at C-20 to the carbonyl carbon at C-3. EsdpH can also functions prior to esdpI. The different combinations of these modification enzymes lead to the production of diverse shearone derivatives, shearone I being the end product of the pathway. The chain is Alpha-ketoglutarate-dependent dioxygenase esdpJ from Penicillium shearii (Eupenicillium shearii).